Here is a 174-residue protein sequence, read N- to C-terminus: Urease accessory protein UreE (174 aa).

The interval 146–174 is disordered; the sequence is NGAYATGGHAHDHDGEPEHVHGPGCQHAH. Positions 154–166 are enriched in basic and acidic residues; the sequence is HAHDHDGEPEHVH.

This sequence belongs to the UreE family.

Its subcellular location is the cytoplasm. Its function is as follows. Involved in urease metallocenter assembly. Binds nickel. Probably functions as a nickel donor during metallocenter assembly. In Albidiferax ferrireducens (strain ATCC BAA-621 / DSM 15236 / T118) (Rhodoferax ferrireducens), this protein is Urease accessory protein UreE.